Consider the following 1348-residue polypeptide: Adhesion G protein-coupled receptor F5 (1348 aa).

Positions 1–21 are cleaved as a signal peptide; sequence MRSPRTFTFYFLLLVICSSEA. Over 22–1019 the chain is Extracellular; it reads ALSTPTEPIV…LKILLDIISY (998 aa). Residues 163–271 form the SEA domain; that stretch reads PEAFITLKLK…NSFQGTPSNE (109 aa). Ig-like domains are found at residues 268-366, 367-464, and 469-559; these read PSNE…LDVT, PIRI…IAVT, and ANLT…KDVT. N-linked (GlcNAc...) asparagine glycans are attached at residues Asn270, Asn286, Asn337, and Asn349. A disulfide bridge connects residues Cys291 and Cys348. The cysteines at positions 389 and 447 are disulfide-linked. Asn470, Asn538, and Asn665 each carry an N-linked (GlcNAc...) asparagine glycan. A disulfide bridge connects residues Cys490 and Cys543. Ser818 carries the post-translational modification Phosphoserine. The GAIN-B domain occupies 841–1005; it reads TPPFLAHPNV…SILMSPDSPD (165 aa). 2 disulfide bridges follow: Cys953-Cys987 and Cys972-Cys989. The interval 953–1005 is GPS; that stretch reads CVFWNFSLANNTGGWDSSGCSVEDDGRDNRDRVFCKCNHLTSFSILMSPDSPD. The tract at residues 993-1008 is tethered agonist; that stretch reads TSFSILMSPDSPDPGS. A helical transmembrane segment spans residues 1020-1040; the sequence is IGLGFSIVSLAACLVVEAMVW. Residues 1041–1055 lie on the Cytoplasmic side of the membrane; that stretch reads KSVTKNRTSYMRHIC. The chain crosses the membrane as a helical span at residues 1056-1076; it reads IVNIAFCLLIADIWFIVAGAI. Over 1077–1092 the chain is Extracellular; the sequence is HDGRYPLNETACVAAT. Residues 1093 to 1113 traverse the membrane as a helical segment; that stretch reads FFIHFFYLSVFFWMLTLGLML. Topologically, residues 1114–1130 are cytoplasmic; sequence FYRLIFILHDASKSTQK. A helical membrane pass occupies residues 1131–1151; that stretch reads AIAFSLGYGCPLIISSITVGV. Residues 1152–1175 lie on the Extracellular side of the membrane; the sequence is TQPQEVYMRKNACWLNWEDTRALL. The helical transmembrane segment at 1176 to 1196 threads the bilayer; that stretch reads AFAIPALIIVVVNVSITVVVI. Residues 1197–1221 are Cytoplasmic-facing; the sequence is TKILRPSIGDKPGKQEKSSLFQISK. The helical transmembrane segment at 1222–1242 threads the bilayer; the sequence is SIGVLTPLLGLTWGFGLATVI. The Extracellular portion of the chain corresponds to 1243–1250; sequence QGSNAVFH. The chain crosses the membrane as a helical span at residues 1251 to 1271; it reads IIFTLLNAFQGLFILLFGCLW. The Cytoplasmic portion of the chain corresponds to 1272 to 1348; it reads DQKVQEALLH…NSSSAYSLLN (77 aa). Thr1302 is subject to Phosphothreonine. Residue Ser1309 is modified to Phosphoserine. The tract at residues 1328-1348 is disordered; that stretch reads STPETTSSSLENSSSAYSLLN.

It belongs to the G-protein coupled receptor 2 family. Adhesion G-protein coupled receptor (ADGR) subfamily. Homodimer; disulfide-linked. Heterodimer of 2 chains generated by proteolytic processing; the large extracellular N-terminal fragment and the membrane-bound C-terminal fragment predominantly remain associated and non-covalently linked. Fragment generates by the processing enzyme furin remains attached to the extracellular N-terminal fragment. Interacts (via N-terminal extracellular domain) with SFTPD. Highly glycosylated. In terms of processing, proteolytically cleaved at multiple sites: one in the GPS region of the GAIN-B domain (S1 site) and the other in the SEA domain (S2 site). The proteolytic cleavage at S1 site generates an extracellular subunit and a seven-transmembrane subunit. The proteolytic cleavage at S2 site generates a fragment that undergoes proteolytic cleavage by the processing enzyme furin. As to expression, widely expressed, with highest levels in lung, pancreas, kidney and heart. In the kidney, expressed more abundantly in the medulla than in the cortex, predominantly expressed in A-intercalated cells (at protein level). Expressed in endothelial cells from various tissues, including brain, heart, kidney, liver, lung and muscle. In the lung, expressed in alveolar type II (ATII) cells (at protein level). Expressed in pancreatic islets of Langerhans, predominantly in delta cells, as well as in endothelial cells. Expressed in white adipose tissue.

It is found in the cell membrane. With respect to regulation, as an adhesion G protein-coupled receptor (aGPCR) exhibits a large N-terminal extracellular domain containing highly conserved GPCR autoproteolysis-inducing (GAIN) domain. During synthesis, intracellular autoproteolytic processing of nascent chain within the GAIN domain generates a mature protein, consisting of an N-terminal fragment that is non-covalently linked to the C-terminal fragment. The mature protein is routed to the plasma membrane where the N- and C-terminal fragments remain associated, forming the holoreceptor. Dissociation of the aGPCR fragments stimulates G protein signaling through the action of the tethered-peptide agonist stalk that is occluded within the GAIN domain in the holoreceptor form. This dissociation might be induced by ligand binding, such as that of sFNDC4. Adhesion G protein-coupled receptor. In alveolar type II (ATII or AT2) cells, required for normal lung surfactant homeostasis. Modulation of both surfactant secretion and uptake by ATII cells is mediated by the downstream activation of GNAQ/GNA11 proteins and may be a consequence of increased cortical F-actin assembly induced by ADGRF5 activation. In the kidney, may play a role in the regulation of acid excretion into the primary urine, possibly by regulating the surface expression of V-ATPase proton pump. As a receptor for soluble FNDC4 (sFNDC4), required for proper systemic glucose tolerance, specifically sensitizing white adipose tissue to insulin. Also plays a role in sFNDC4-induced decrease of local inflammation in white adipose tissue. This is Adhesion G protein-coupled receptor F5 (Adgrf5) from Mus musculus (Mouse).